The primary structure comprises 257 residues: Protein YIPF5 (257 aa).

Over 1–124 the chain is Cytoplasmic; the sequence is MSGFDNFNTD…KASDGSIMNE (124 aa). The helical transmembrane segment at 125–145 threads the bilayer; the sequence is TDLAGPMVFCLAFGATLLLTG. A topological domain (lumenal) is located at residue K146. A helical membrane pass occupies residues 147-167; it reads IQFGYVYGISAIGCLGMYCLL. At 168–173 the chain is on the cytoplasmic side; the sequence is NLMSMT. A helical membrane pass occupies residues 174-194; the sequence is GVSFGCVASVLGYCLLPMIIL. Over 195-196 the chain is Lumenal; sequence SS. The chain crosses the membrane as a helical span at residues 197–217; it reads FGVIFSLQGIMGIILTAAIIG. At 218 to 236 the chain is on the cytoplasmic side; the sequence is WCSLSASKIFISALAMDGQ. Residues 237–257 form a helical membrane-spanning segment; sequence QLLVAYPCALLYGVFALISVF.

The protein belongs to the YIP1 family.

It is found in the endoplasmic reticulum membrane. The protein resides in the golgi apparatus. The protein localises to the cis-Golgi network membrane. Functionally, plays a role in transport between endoplasmic reticulum and Golgi. The chain is Protein YIPF5 (yipf5) from Danio rerio (Zebrafish).